Here is a 572-residue protein sequence, read N- to C-terminus: NADP-dependent malic enzyme (572 aa).

Position 1 is an N-acetylmethionine (methionine 1). Tyrosine 102 (proton donor) is an active-site residue. An NADP(+)-binding site is contributed by arginine 155. Lysine 173 functions as the Proton acceptor in the catalytic mechanism. A divalent metal cation-binding residues include glutamate 245, aspartate 246, and aspartate 269. Residues aspartate 269 and 301–318 (GAGE…MALE) contribute to the NADP(+) site. At serine 336 the chain carries Phosphoserine. Asparagine 408 is a binding site for NADP(+).

It belongs to the malic enzymes family. In terms of assembly, homotetramer. It depends on Mg(2+) as a cofactor. Mn(2+) is required as a cofactor. As to expression, expressed in all tissues tested including liver, placenta and white adipose tissue.

It is found in the cytoplasm. The enzyme catalyses (S)-malate + NADP(+) = pyruvate + CO2 + NADPH. The catalysed reaction is oxaloacetate + H(+) = pyruvate + CO2. Catalyzes the oxidative decarboxylation of (S)-malate in the presence of NADP(+) and divalent metal ions, and decarboxylation of oxaloacetate. The protein is NADP-dependent malic enzyme of Homo sapiens (Human).